We begin with the raw amino-acid sequence, 349 residues long: E3 ubiquitin-protein ligase rnf146 (349 aa).

Positions M1 to S21 are disordered. Positions S10 to S21 are enriched in low complexity. The RING-type zinc finger occupies C41–R79. Residues E97–R173 form the WWE domain. Positions 113, 116, 120, 150, 159, 169, and 181 each coordinate a glycoprotein. Disordered regions lie at residues T226–L251 and D264–V349. A compositionally biased stretch (polar residues) spans S283–A292. The span at W298 to A307 shows a compositional bias: acidic residues. Over residues V308–L317 the composition is skewed to basic and acidic residues.

It is found in the cytoplasm. It localises to the cytosol. The protein resides in the nucleus. It catalyses the reaction S-ubiquitinyl-[E2 ubiquitin-conjugating enzyme]-L-cysteine + [acceptor protein]-L-lysine = [E2 ubiquitin-conjugating enzyme]-L-cysteine + N(6)-ubiquitinyl-[acceptor protein]-L-lysine.. It participates in protein modification; protein ubiquitination. In terms of biological role, E3 ubiquitin-protein ligase that specifically binds poly-ADP-ribosylated proteins and mediates their ubiquitination and subsequent degradation. May regulate many important biological processes, such as cell survival and DNA damage response. Acts as an activator of the Wnt signaling pathway by mediating the ubiquitination of poly-ADP-ribosylated proteins. Neuroprotective protein. Protects against cell death induced by DNA damaging agents and rescues cells from G1 arrest. Promotes cell survival after gamma-irradiation. Facilitates DNA repair. The protein is E3 ubiquitin-protein ligase rnf146 (rnf146) of Salmo salar (Atlantic salmon).